Reading from the N-terminus, the 230-residue chain is 7-cyano-7-deazaguanine synthase (230 aa).

Position 7 to 17 (7 to 17 (CSGGLDSVSLA)) interacts with ATP. Positions 185, 193, 196, and 199 each coordinate Zn(2+).

Belongs to the QueC family. Zn(2+) is required as a cofactor.

It catalyses the reaction 7-carboxy-7-deazaguanine + NH4(+) + ATP = 7-cyano-7-deazaguanine + ADP + phosphate + H2O + H(+). Its pathway is purine metabolism; 7-cyano-7-deazaguanine biosynthesis. Its function is as follows. Catalyzes the ATP-dependent conversion of 7-carboxy-7-deazaguanine (CDG) to 7-cyano-7-deazaguanine (preQ(0)). This Ruegeria pomeroyi (strain ATCC 700808 / DSM 15171 / DSS-3) (Silicibacter pomeroyi) protein is 7-cyano-7-deazaguanine synthase.